The sequence spans 164 residues: Deoxyuridine 5'-triphosphate nucleotidohydrolase (164 aa).

Substrate contacts are provided by residues 66–68 (RSG), N79, 83–85 (TVD), and K93.

The protein belongs to the dUTPase family. Requires Mg(2+) as cofactor.

It catalyses the reaction dUTP + H2O = dUMP + diphosphate + H(+). Its pathway is pyrimidine metabolism; dUMP biosynthesis; dUMP from dCTP (dUTP route): step 2/2. Functionally, this enzyme is involved in nucleotide metabolism: it produces dUMP, the immediate precursor of thymidine nucleotides and it decreases the intracellular concentration of dUTP so that uracil cannot be incorporated into DNA. The sequence is that of Deoxyuridine 5'-triphosphate nucleotidohydrolase from Rhodococcus erythropolis (strain PR4 / NBRC 100887).